The primary structure comprises 528 residues: Ivanolysin (528 aa).

The first 23 residues, 1 to 23 (MKKIMLLLMTLLLVSLPLAQEAQ), serve as a signal peptide directing secretion. Beta stranded transmembrane passes span 213–226 (ESQL…AFKA), 233–242 (VNFGAISEGK), 311–320 (STRVKAAFDT), and 328–340 (KGDT…IQNA). A Conserved undecapeptide motif is present at residues 482-492 (ECTGLAWEWWR). Residues 514–515 (TL) carry the Cholesterol binding motif.

The protein belongs to the cholesterol-dependent cytolysin family. Homooligomeric pore complex of 35 to 50 subunits; when inserted in the host membrane.

It is found in the secreted. Its subcellular location is the host membrane. A cholesterol-dependent toxin that causes cytolysis by forming pores in cholesterol containing host membranes. After binding to target membranes, the protein undergoes a major conformation change, leading to its insertion in the host membrane and formation of an oligomeric pore complex. Cholesterol is required for binding to host membranes, membrane insertion and pore formation; cholesterol binding is mediated by a Thr-Leu pair in the C-terminus. Can be reversibly inactivated by oxidation. The protein is Ivanolysin (ilo) of Listeria ivanovii.